Here is a 289-residue protein sequence, read N- to C-terminus: YLVNPAAYAAPGAYMFLLILVGFPVNFLTLYVTLEHKKLRTPLNYILLNLAVADLFMVLGGFTTTMYTSMHGYFVLGRLGCNLEGFFATLGGEIALWSLVVLAIERWIVVCKPISNFRFTEDHAIMGLAFSWVMALTCAVPPLVGWSRYIPEGMQCSCGVDYYTRAEGFNNESFVIYMFIVHFLIPLSNNFFCYGRLLCAVKEAAAAQQESETTQRAEREVSRMVVMMVVSFLMCWLPYASVAWYIFCNQGSEFGPIFMTLPAFFAKSSAIYNPLIYICMNKHVRHCMI.

Residues 1 to 7 (YLVNPAA) are Extracellular-facing. Residues 8-32 (YAAPGAYMFLLILVGFPVNFLTLYV) traverse the membrane as a helical segment. The Cytoplasmic portion of the chain corresponds to 33–44 (TLEHKKLRTPLN). The chain crosses the membrane as a helical span at residues 45-67 (YILLNLAVADLFMVLGGFTTTMY). Topologically, residues 68–81 (TSMHGYFVLGRLGC) are extracellular. An intrachain disulfide couples cysteine 81 to cysteine 158. Residues 82 to 104 (NLEGFFATLGGEIALWSLVVLAI) form a helical membrane-spanning segment. Residues 105–107 (ERW) carry the 'Ionic lock' involved in activated form stabilization motif. The Cytoplasmic portion of the chain corresponds to 105–123 (ERWIVVCKPISNFRFTEDH). The helical transmembrane segment at 124–144 (AIMGLAFSWVMALTCAVPPLV) threads the bilayer. At 145 to 173 (GWSRYIPEGMQCSCGVDYYTRAEGFNNES) the chain is on the extracellular side. Asparagine 171 is a glycosylation site (N-linked (GlcNAc...) asparagine). The chain crosses the membrane as a helical span at residues 174–195 (FVIYMFIVHFLIPLSNNFFCYG). Residues 196–223 (RLLCAVKEAAAAQQESETTQRAEREVSR) lie on the Cytoplasmic side of the membrane. Residues 224–245 (MVVMMVVSFLMCWLPYASVAWY) traverse the membrane as a helical segment. At 246–257 (IFCNQGSEFGPI) the chain is on the extracellular side. Residues 258–279 (FMTLPAFFAKSSAIYNPLIYIC) traverse the membrane as a helical segment. Lysine 267 is modified (N6-(retinylidene)lysine). Residues 280–289 (MNKHVRHCMI) lie on the Cytoplasmic side of the membrane.

This sequence belongs to the G-protein coupled receptor 1 family. Opsin subfamily. In terms of processing, phosphorylated on some or all of the serine and threonine residues present in the C-terminal region. Post-translationally, contains one covalently linked retinal chromophore.

Its subcellular location is the membrane. It is found in the cell projection. The protein resides in the cilium. The protein localises to the photoreceptor outer segment. Its function is as follows. Photoreceptor required for image-forming vision at low light intensity. While most salt water fish species use retinal as chromophore, most freshwater fish use 3-dehydroretinal, or a mixture of retinal and 3-dehydroretinal. Light-induced isomerization of 11-cis to all-trans retinal triggers a conformational change that activates signaling via G-proteins. Subsequent receptor phosphorylation mediates displacement of the bound G-protein alpha subunit by arrestin and terminates signaling. In Cottocomephorus grewingkii (Baikal yellowfin), this protein is Rhodopsin (rho).